Reading from the N-terminus, the 393-residue chain is ATP phosphoribosyltransferase regulatory subunit (393 aa).

This sequence belongs to the class-II aminoacyl-tRNA synthetase family. HisZ subfamily. Heteromultimer composed of HisG and HisZ subunits.

It is found in the cytoplasm. Its pathway is amino-acid biosynthesis; L-histidine biosynthesis; L-histidine from 5-phospho-alpha-D-ribose 1-diphosphate: step 1/9. In terms of biological role, required for the first step of histidine biosynthesis. May allow the feedback regulation of ATP phosphoribosyltransferase activity by histidine. The chain is ATP phosphoribosyltransferase regulatory subunit from Shouchella clausii (strain KSM-K16) (Alkalihalobacillus clausii).